The following is a 505-amino-acid chain: MNLVNPSILVACILSFCLGAIGCLAFSPFDIWLIAYLSAAGLIWAATLVERKTAMLATFAWSIGYFGVGVQWVNVSMTQFGGVPVIVSYLAVLLLASYLGLYNLLFSYLARRFGLISPFVLASLFTFTEYLRGVVFTGFPWLQFGYTQIDSPFAQLAPIFGVEGLTFLVILLSSYLVDIVKNPTRKIATFTKIAVIIGFSLASNLLQFVQIDQQKPPVKVALIQANIEQQLKWDPAHFENTLRTYQQLINSSLAENEVIILPESAIPALESKINPLLNQLQKMAAAKNTEIIIGTLYENEQQQLFNSALVLGNQTKPYQLHQSLRYNKHHLVPFGEYVPFGSLLDWMREVFILPVNLAKGPFIQPALFTNKGKFNMAICYEVIFGHQLQQNQLAQQADYLITITNDAWFGDSIGPWQHLQMARMRALELGKPLLRAANTGITAVVGFDGKVIKKLPQFETNTLTAEIATTKGHTLFGQFGHWLIYSLSFICVAFGLFRRQKHKKH.

Helical transmembrane passes span 6-26 (PSIL…CLAF), 29-49 (FDIW…ATLV), 53-73 (TAML…VQWV), 80-100 (FGGV…SYLG), 119-139 (FVLA…FTGF), 152-172 (PFAQ…VILL), and 189-209 (TFTK…LQFV). Residues 223–469 (IQANIEQQLK…TNTLTAEIAT (247 aa)) form the CN hydrolase domain. Glutamate 263 serves as the catalytic Proton acceptor. Lysine 328 is an active-site residue. Residue cysteine 379 is the Nucleophile of the active site. A helical membrane pass occupies residues 475-495 (LFGQFGHWLIYSLSFICVAFG).

This sequence belongs to the CN hydrolase family. Apolipoprotein N-acyltransferase subfamily.

The protein resides in the cell inner membrane. The enzyme catalyses N-terminal S-1,2-diacyl-sn-glyceryl-L-cysteinyl-[lipoprotein] + a glycerophospholipid = N-acyl-S-1,2-diacyl-sn-glyceryl-L-cysteinyl-[lipoprotein] + a 2-acyl-sn-glycero-3-phospholipid + H(+). The protein operates within protein modification; lipoprotein biosynthesis (N-acyl transfer). In terms of biological role, catalyzes the phospholipid dependent N-acylation of the N-terminal cysteine of apolipoprotein, the last step in lipoprotein maturation. The protein is Apolipoprotein N-acyltransferase of Haemophilus ducreyi (strain 35000HP / ATCC 700724).